The sequence spans 691 residues: Elongation factor G (691 aa).

The tr-type G domain occupies 12–286 (KKLRNIGIMA…GILEYLPSPL (275 aa)). GTP is bound by residues 21–28 (AHIDAGKT), 85–89 (DTPGH), and 139–142 (NKMD).

It belongs to the TRAFAC class translation factor GTPase superfamily. Classic translation factor GTPase family. EF-G/EF-2 subfamily.

It is found in the cytoplasm. Its function is as follows. Catalyzes the GTP-dependent ribosomal translocation step during translation elongation. During this step, the ribosome changes from the pre-translocational (PRE) to the post-translocational (POST) state as the newly formed A-site-bound peptidyl-tRNA and P-site-bound deacylated tRNA move to the P and E sites, respectively. Catalyzes the coordinated movement of the two tRNA molecules, the mRNA and conformational changes in the ribosome. In Thermosipho africanus (strain TCF52B), this protein is Elongation factor G.